Reading from the N-terminus, the 180-residue chain is MHEFVTICIMAAALGMDAFSVALGMGMLKLSGKQIFRIGLTIGLFHVAMPLAGMAVGKWLSGHFDVIATYIGGGLLLVIGVQMALNAFSDHEAEGLKPAGWGLLLFAVGVSLDSFSAGLSFGILGTEMFVTVGMIGAMSMVMSWIGLIVGSHFQKFLGAYGELLGGLVLIGFGLKIMLPL.

Helical transmembrane passes span 4–24, 40–60, 64–84, 103–123, 129–149, and 156–176; these read FVTICIMAAALGMDAFSVALG, LTIGLFHVAMPLAGMAVGKWL, FDVIATYIGGGLLLVIGVQMA, LLLFAVGVSLDSFSAGLSFGI, FVTVGMIGAMSMVMSWIGLIV, and FLGAYGELLGGLVLIGFGLKI.

It belongs to the MntP (TC 9.B.29) family.

The protein resides in the cell membrane. In terms of biological role, probably functions as a manganese efflux pump. This Shouchella clausii (strain KSM-K16) (Alkalihalobacillus clausii) protein is Putative manganese efflux pump MntP.